The chain runs to 852 residues: DNA polymerase kappa (852 aa).

A UmuC domain is found at 102 to 357; the sequence is IVHVDMDAFY…LPIRKVSGIG (256 aa). Positions 106 and 197 each coordinate Mg(2+). The tract at residues 252 to 273 is disordered; the sequence is FEDSPPDLQPQGSPFQLNSEEQ. Over residues 261–273 the composition is skewed to polar residues; sequence PQGSPFQLNSEEQ. 2 UBZ4-type zinc fingers span residues 619 to 649 and 761 to 791; these read TFIC…DGPS and ALVC…NKGI. Residues cysteine 622, cysteine 625, histidine 640, cysteine 644, cysteine 764, cysteine 767, histidine 782, and cysteine 786 each contribute to the Zn(2+) site. Residues 798 to 852 are disordered; the sequence is SEGNSVKQPKESSRSTDRLQKASGRTKRPGTKTKSSTLKKTKPRDPRHTLDGFFK. Positions 805 to 817 are enriched in basic and acidic residues; that stretch reads QPKESSRSTDRLQ. Positions 821–839 are enriched in basic residues; it reads GRTKRPGTKTKSSTLKKTK. The segment covering 840 to 852 has biased composition (basic and acidic residues); that stretch reads PRDPRHTLDGFFK.

This sequence belongs to the DNA polymerase type-Y family. As to quaternary structure, interacts with PCNA. Interacts with REV1. The cofactor is Mg(2+). Mn(2+) serves as cofactor. Detected at low levels in heart, brain, lung, liver, kidney and testis.

The protein resides in the nucleus. It carries out the reaction DNA(n) + a 2'-deoxyribonucleoside 5'-triphosphate = DNA(n+1) + diphosphate. In terms of biological role, DNA polymerase specifically involved in DNA repair. Plays an important role in translesion synthesis, where the normal high-fidelity DNA polymerases cannot proceed and DNA synthesis stalls. Depending on the context, it inserts the correct base, but causes frequent base transitions, transversions and frameshifts. Lacks 3'-5' proofreading exonuclease activity. Forms a Schiff base with 5'-deoxyribose phosphate at abasic sites, but does not have lyase activity. The chain is DNA polymerase kappa (Polk) from Mus musculus (Mouse).